The primary structure comprises 141 residues: Protein archease (141 aa).

2 residues coordinate Ca(2+): Asp-19 and Asp-140.

The protein belongs to the archease family.

Functionally, activates the tRNA-splicing ligase complex by facilitating the enzymatic turnover of catalytic subunit RtcB. Acts by promoting the guanylylation of RtcB, a key intermediate step in tRNA ligation. Can also alter the NTP specificity of RtcB such that ATP, dGTP or ITP is used efficiently. The protein is Protein archease of Thermoplasma acidophilum (strain ATCC 25905 / DSM 1728 / JCM 9062 / NBRC 15155 / AMRC-C165).